The sequence spans 230 residues: 2,3-bisphosphoglycerate-dependent phosphoglycerate mutase (230 aa).

Residues 8-15 (RHGQSEWN), 21-22 (TG), R60, 87-90 (ERHY), K98, 114-115 (RR), and 183-184 (GN) contribute to the substrate site. H9 (tele-phosphohistidine intermediate) is an active-site residue. E87 functions as the Proton donor/acceptor in the catalytic mechanism.

Belongs to the phosphoglycerate mutase family. BPG-dependent PGAM subfamily.

The catalysed reaction is (2R)-2-phosphoglycerate = (2R)-3-phosphoglycerate. The protein operates within carbohydrate degradation; glycolysis; pyruvate from D-glyceraldehyde 3-phosphate: step 3/5. Its function is as follows. Catalyzes the interconversion of 2-phosphoglycerate and 3-phosphoglycerate. The polypeptide is 2,3-bisphosphoglycerate-dependent phosphoglycerate mutase (Lactobacillus acidophilus (strain ATCC 700396 / NCK56 / N2 / NCFM)).